We begin with the raw amino-acid sequence, 470 residues long: D-serine/D-alanine/glycine transporter (470 aa).

The next 12 helical transmembrane spans lie at 30–50 (LIAI…KTIS), 51–71 (LAGP…FFVM), 102–122 (FTGW…VVAI), 137–157 (VASL…VKMF), 162–182 (FWFA…GLVM), 211–231 (LSGF…IELV), 256–276 (IIMF…WSSV), 283–303 (FVEL…NFVV), 350–370 (FSCI…SVIG), 371–391 (AFTM…TIIL), 413–433 (PLGK…VVLL), and 441–461 (QALL…LFIG).

Belongs to the amino acid-polyamine-organocation (APC) superfamily. Amino acid transporter (AAT) (TC 2.A.3.1) family.

It localises to the cell inner membrane. It catalyses the reaction D-alanine(in) + H(+)(in) = D-alanine(out) + H(+)(out). It carries out the reaction D-serine(out) + H(+)(out) = D-serine(in) + H(+)(in). The catalysed reaction is glycine(in) + H(+)(in) = glycine(out) + H(+)(out). Its function is as follows. Permease that is involved in the transport across the cytoplasmic membrane of D-alanine, D-serine and glycine. The chain is D-serine/D-alanine/glycine transporter (cycA) from Escherichia coli O157:H7.